Consider the following 306-residue polypeptide: Oxygen-dependent coproporphyrinogen-III oxidase (306 aa).

Serine 94 provides a ligand contact to substrate. The a divalent metal cation site is built by histidine 98 and histidine 108. Histidine 108 acts as the Proton donor in catalysis. 110-112 contacts substrate; that stretch reads NVR. Residues histidine 147 and histidine 177 each contribute to the a divalent metal cation site. The segment at 242–277 is important for dimerization; that stretch reads YVEFNLVYDRGTLFGLQTGGRTESILMSMPPLVRWQ. 260–262 lines the substrate pocket; that stretch reads GGR.

Belongs to the aerobic coproporphyrinogen-III oxidase family. Homodimer. A divalent metal cation is required as a cofactor.

The protein localises to the cytoplasm. It carries out the reaction coproporphyrinogen III + O2 + 2 H(+) = protoporphyrinogen IX + 2 CO2 + 2 H2O. The protein operates within porphyrin-containing compound metabolism; protoporphyrin-IX biosynthesis; protoporphyrinogen-IX from coproporphyrinogen-III (O2 route): step 1/1. Involved in the heme biosynthesis. Catalyzes the aerobic oxidative decarboxylation of propionate groups of rings A and B of coproporphyrinogen-III to yield the vinyl groups in protoporphyrinogen-IX. In Shewanella sediminis (strain HAW-EB3), this protein is Oxygen-dependent coproporphyrinogen-III oxidase.